The chain runs to 212 residues: Small ribosomal subunit protein uS2 (212 aa).

The tract at residues 190 to 212 (LSPDAPEDQPAPVSEFETKVKMV) is disordered.

The protein belongs to the universal ribosomal protein uS2 family.

The protein is Small ribosomal subunit protein uS2 of Ignicoccus hospitalis (strain KIN4/I / DSM 18386 / JCM 14125).